Here is a 291-residue protein sequence, read N- to C-terminus: Nucleotide-binding protein EUBREC_0697 (291 aa).

8-15 (GMSGAGKS) contributes to the ATP binding site. GTP is bound at residue 59–62 (DVRN).

This sequence belongs to the RapZ-like family.

Its function is as follows. Displays ATPase and GTPase activities. This Agathobacter rectalis (strain ATCC 33656 / DSM 3377 / JCM 17463 / KCTC 5835 / VPI 0990) (Eubacterium rectale) protein is Nucleotide-binding protein EUBREC_0697.